A 355-amino-acid chain; its full sequence is Neutral protease 2 homolog MEP6 (355 aa).

The N-terminal stretch at 1–19 is a signal peptide; the sequence is MRLSSSLIALVALAGQALA. Positions 20–179 are excised as a propeptide; that stretch reads LPFNELAERD…ASAIPELNKR (160 aa). Disulfide bonds link cysteine 187–cysteine 259 and cysteine 266–cysteine 283. Histidine 307 is a Zn(2+) binding site. The active site involves glutamate 308. Residues histidine 311 and aspartate 322 each contribute to the Zn(2+) site.

This sequence belongs to the peptidase M35 family. The cofactor is Zn(2+).

The protein localises to the secreted. It carries out the reaction Preferential cleavage of bonds with hydrophobic residues in P1'. Also 3-Asn-|-Gln-4 and 8-Gly-|-Ser-9 bonds in insulin B chain.. Secreted metalloproteinase that allows assimilation of proteinaceous substrates. Shows high activities on basic nuclear substrates such as histone and protamine. May be involved in virulence. This chain is Neutral protease 2 homolog MEP6 (MEP6), found in Coccidioides posadasii (strain C735) (Valley fever fungus).